Reading from the N-terminus, the 404-residue chain is Ubiquitin-like modifier-activating enzyme 5 (404 aa).

Residues Gly-83, Asp-104, Lys-127, Asn-150, and Asn-184 each contribute to the ATP site. The Zn(2+) site is built by Cys-226 and Cys-229. The active-site Glycyl thioester intermediate is Cys-250. Zn(2+)-binding residues include Cys-303 and Cys-308. Positions Ala-372–Ser-393 are disordered. Positions Glu-382–Glu-391 are enriched in low complexity.

It belongs to the ubiquitin-activating E1 family. UBA5 subfamily.

Its function is as follows. E1-like enzyme which activates UFM1. The chain is Ubiquitin-like modifier-activating enzyme 5 from Drosophila simulans (Fruit fly).